The primary structure comprises 546 residues: Nuclear rim protein 1 (546 aa).

2 stretches are compositionally biased toward basic and acidic residues: residues 1 to 10 and 25 to 35; these read MAFWRNRHES and QNSEDIREDNN. The interval 1–35 is disordered; that stretch reads MAFWRNRHESPAISQERSPSPDRFQNSEDIREDNN. A run of 2 helical transmembrane segments spans residues 155–175 and 249–269; these read FYLL…RYLF and FLTS…WMTD. 2 disordered regions span residues 405-441 and 505-546; these read YPSR…PSQQ and RQGY…SPFR. Residues 406 to 441 show a composition bias toward polar residues; it reads PSRQHSPRLSPSRYSHLQSGNTPSAPSTPLLIPSQQ. Over residues 533-546 the composition is skewed to low complexity; it reads SKSPFRNSSSSPFR.

The protein belongs to the NUR1 family.

Its subcellular location is the nucleus membrane. Member of a perinuclear network that controls recombination at multiple loci to maintain genome stability. Required for rDNA repeat stability. The chain is Nuclear rim protein 1 (NUR1) from Kluyveromyces lactis (strain ATCC 8585 / CBS 2359 / DSM 70799 / NBRC 1267 / NRRL Y-1140 / WM37) (Yeast).